The chain runs to 504 residues: Maturase K (504 aa).

This sequence belongs to the intron maturase 2 family. MatK subfamily.

Its subcellular location is the plastid. It localises to the chloroplast. Functionally, usually encoded in the trnK tRNA gene intron. Probably assists in splicing its own and other chloroplast group II introns. In Mentzelia laevicaulis (Blazing star), this protein is Maturase K.